Consider the following 457-residue polypeptide: PDZ and LIM domain protein 7 (457 aa).

Residues 1 to 85 (MDSFKVVLEG…RLSLGLSRAQ (85 aa)) form the PDZ domain. S78 is modified (phosphoserine). Disordered stretches follow at residues 82–166 (SRAQ…QSRS) and 186–226 (FMKK…PWAV). The residue at position 96 (T96) is a Phosphothreonine. R103 carries the post-translational modification Asymmetric dimethylarginine. S111 is subject to Phosphoserine. The segment covering 126–135 (DSTLRQNGQL) has biased composition (polar residues). Residues 144-157 (SKQRLMEDTEDWRP) are compositionally biased toward basic and acidic residues. S247 carries the phosphoserine modification. LIM zinc-binding domains lie at 280–338 (PVCH…VRYA), 339–398 (PNCA…MFGT), and 399–457 (KCRG…FSHV).

Specifically binds via its LIM zinc-binding 3 domain (LIM 3) domain to endocytic codes of INSR, but not with those of IGF1R, LDLR, TFRC, or EGFR. Interacts with various PKC isoforms through the LIM zinc-binding domains. Binds to RET in a phosphorylation-independent manner via its LIM zinc-binding domain 2 (LIM 2). Probably part of a complex with SHC and the RET dimer. Interacts with TPM2, TBX4 and TBX5.

Its subcellular location is the cytoplasm. It localises to the cytoskeleton. Its function is as follows. May function as a scaffold on which the coordinated assembly of proteins can occur. May play a role as an adapter that, via its PDZ domain, localizes LIM-binding proteins to actin filaments of both skeletal muscle and nonmuscle tissues. Involved in both of the two fundamental mechanisms of bone formation, direct bone formation (e.g. embryonic flat bones mandible and cranium), and endochondral bone formation (e.g. embryonic long bone development). Plays a role during fracture repair. Involved in BMP6 signaling pathway. This is PDZ and LIM domain protein 7 (Pdlim7) from Mus musculus (Mouse).